A 702-amino-acid chain; its full sequence is Arylphorin subunit alpha (702 aa).

Residues 1 to 16 form the signal peptide; sequence MKTVVILAGLVALALS. Asn75 and Asn214 each carry an N-linked (GlcNAc...) asparagine glycan.

This sequence belongs to the hemocyanin family. As to quaternary structure, arylphorin is a hexamer of subunits alpha and beta. As to expression, fat body.

It is found in the secreted. Its subcellular location is the extracellular space. In terms of biological role, arylphorin is a larval storage protein (LSP) which may serve as a storage protein used primarily as a source of aromatic amino acids for protein synthesis during metamorphosis. It is a constituent of the sclerotizing system of the cuticle, and serves as a carrier for ecdysteroid hormone. The protein is Arylphorin subunit alpha of Manduca sexta (Tobacco hawkmoth).